Consider the following 538-residue polypeptide: Putative cysteine ligase BshC (538 aa).

Residues 460–484 are a coiled coil; it reads KINEQIELLERMLKRNVEKKHEVEL.

It belongs to the BshC family.

Functionally, involved in bacillithiol (BSH) biosynthesis. May catalyze the last step of the pathway, the addition of cysteine to glucosamine malate (GlcN-Mal) to generate BSH. This Bacillus thuringiensis subsp. konkukian (strain 97-27) protein is Putative cysteine ligase BshC.